The following is a 670-amino-acid chain: Methionine--tRNA ligase (670 aa).

The 'HIGH' region motif lies at 14 to 24; that stretch reads PYANGHLHLGH. Zn(2+) is bound by residues C145, C148, C158, and C161. The 'KMSKS' region motif lies at 330–334; it reads KMSKS. Position 333 (K333) interacts with ATP. The tRNA-binding domain maps to 570–670; the sequence is DFAKVDLRIA…AGALPGMKVK (101 aa).

This sequence belongs to the class-I aminoacyl-tRNA synthetase family. MetG type 1 subfamily. As to quaternary structure, homodimer. Zn(2+) is required as a cofactor.

It is found in the cytoplasm. It catalyses the reaction tRNA(Met) + L-methionine + ATP = L-methionyl-tRNA(Met) + AMP + diphosphate. Is required not only for elongation of protein synthesis but also for the initiation of all mRNA translation through initiator tRNA(fMet) aminoacylation. The sequence is that of Methionine--tRNA ligase from Legionella pneumophila (strain Paris).